We begin with the raw amino-acid sequence, 168 residues long: Phosphopantetheine adenylyltransferase (168 aa).

Thr9 contributes to the substrate binding site. ATP is bound by residues 9–10 (TF) and His17. 3 residues coordinate substrate: Lys41, Leu74, and Arg88. ATP contacts are provided by residues 89–91 (GLR), Glu99, and 124–130 (LQPIASR).

It belongs to the bacterial CoaD family. Homohexamer. The cofactor is Mg(2+).

The protein localises to the cytoplasm. The catalysed reaction is (R)-4'-phosphopantetheine + ATP + H(+) = 3'-dephospho-CoA + diphosphate. Its pathway is cofactor biosynthesis; coenzyme A biosynthesis; CoA from (R)-pantothenate: step 4/5. Its function is as follows. Reversibly transfers an adenylyl group from ATP to 4'-phosphopantetheine, yielding dephospho-CoA (dPCoA) and pyrophosphate. This is Phosphopantetheine adenylyltransferase from Sphingopyxis alaskensis (strain DSM 13593 / LMG 18877 / RB2256) (Sphingomonas alaskensis).